The sequence spans 197 residues: dITP/XTP pyrophosphatase (197 aa).

7–12 (TGNEQK) contributes to the substrate binding site. Mg(2+) is bound by residues Glu44 and Asp73. Catalysis depends on Asp73, which acts as the Proton acceptor. Residues Thr74, 156-159 (FGYD), Lys179, and 184-185 (HR) contribute to the substrate site.

It belongs to the HAM1 NTPase family. Homodimer. Mg(2+) is required as a cofactor.

The enzyme catalyses XTP + H2O = XMP + diphosphate + H(+). It catalyses the reaction dITP + H2O = dIMP + diphosphate + H(+). It carries out the reaction ITP + H2O = IMP + diphosphate + H(+). Pyrophosphatase that catalyzes the hydrolysis of nucleoside triphosphates to their monophosphate derivatives, with a high preference for the non-canonical purine nucleotides XTP (xanthosine triphosphate), dITP (deoxyinosine triphosphate) and ITP. Seems to function as a house-cleaning enzyme that removes non-canonical purine nucleotides from the nucleotide pool, thus preventing their incorporation into DNA/RNA and avoiding chromosomal lesions. The sequence is that of dITP/XTP pyrophosphatase from Elusimicrobium minutum (strain Pei191).